The primary structure comprises 370 residues: DNA replication and repair protein RecF (370 aa).

33–40 (GPNAAGKT) provides a ligand contact to ATP.

It belongs to the RecF family.

It localises to the cytoplasm. The RecF protein is involved in DNA metabolism; it is required for DNA replication and normal SOS inducibility. RecF binds preferentially to single-stranded, linear DNA. It also seems to bind ATP. The chain is DNA replication and repair protein RecF from Moorella thermoacetica (strain ATCC 39073 / JCM 9320).